Here is a 466-residue protein sequence, read N- to C-terminus: Metaxin-1 (466 aa).

The span at 1–19 shows a compositional bias: low complexity; sequence MLLGGPPRSPRSGTSPKGP. The disordered stretch occupies residues 1 to 133; the sequence is MLLGGPPRSP…AVAGGGPRQG (133 aa). The span at 20–36 shows a compositional bias: polar residues; it reads WSSTGHVQFGKSPQTWP. A compositionally biased stretch (low complexity) spans 90 to 110; it reads ARGPVPRSSAASRARRSLASP. Residues lysine 187, lysine 190, lysine 227, and lysine 317 each participate in a glycyl lysine isopeptide (Lys-Gly) (interchain with G-Cter in ubiquitin) cross-link. The helical transmembrane segment at 421–441 threads the bilayer; that stretch reads ILSVLAGLAAMVGYALLSGIV.

Belongs to the metaxin family. As to quaternary structure, interacts with MTX2/metaxin-2. Associates with the mitochondrial contact site and cristae organizing system (MICOS) complex, composed of at least MICOS10/MIC10, CHCHD3/MIC19, CHCHD6/MIC25, APOOL/MIC27, IMMT/MIC60, APOO/MIC23/MIC26 and QIL1/MIC13. This complex was also known under the names MINOS or MitOS complex. The MICOS complex associates with mitochondrial outer membrane proteins SAMM50, MTX1 and MTX2 (together described as components of the mitochondrial outer membrane sorting assembly machinery (SAM) complex) and DNAJC11, mitochondrial inner membrane protein TMEM11 and with HSPA9. The MICOS and SAM complexes together with DNAJC11 are part of a large protein complex spanning both membranes termed the mitochondrial intermembrane space bridging (MIB) complex. Interacts with ARMC1. Post-translationally, ubiquitinated by PRKN during mitophagy, leading to its degradation and enhancement of mitophagy. Deubiquitinated by USP30.

It is found in the membrane. It localises to the mitochondrion outer membrane. In terms of biological role, involved in transport of proteins into the mitochondrion. Essential for embryonic development. The chain is Metaxin-1 (MTX1) from Homo sapiens (Human).